The primary structure comprises 860 residues: Ubiquitin fusion degradation protein 3 homolog (860 aa).

6 WD repeats span residues 27-65, 71-112, 115-154, 163-203, 204-242, and 244-283; these read AHKS…YTKT, PKGI…PYAI, EHKQ…SSSF, GHTL…SVFK, GHTD…ILRK, and ATQA…DGNL. One can recognise a PFU domain in the interval 397–497; it reads PIHYLEEITR…DKLSKGAASA (101 aa). A disordered region spans residues 494 to 585; it reads AASAQSGYED…LPQNKKKPRG (92 aa). The PUL domain occupies 586-856; the sequence is PLVPVPDFYI…KNIARDIVEM (271 aa).

The protein belongs to the WD repeat PLAP family. Interacts with cdc-48.1. In terms of tissue distribution, expressed in intestine (at protein level).

The protein resides in the cytoplasm. Functionally, plays a role in protein ubiquitination, sorting and degradation through its association with cdc-48.1 and/or cdc-48.2. The polypeptide is Ubiquitin fusion degradation protein 3 homolog (Caenorhabditis elegans).